Here is a 432-residue protein sequence, read N- to C-terminus: GTPase Obg (432 aa).

An Obg domain is found at 1 to 158 (MFVDQVKIYV…RNIILELKLL (158 aa)). One can recognise an OBG-type G domain in the interval 159-329 (ADVGLVGFPS…LLFAIADLLE (171 aa)). GTP is bound by residues 165-172 (GFPSVGKS), 190-194 (FTTLV), 212-215 (DLPG), 282-285 (NKMD), and 310-312 (SAA). Ser-172 and Thr-192 together coordinate Mg(2+). In terms of domain architecture, OCT spans 350 to 428 (KYEKEEPPFT…LLDYEFEFVD (79 aa)).

This sequence belongs to the TRAFAC class OBG-HflX-like GTPase superfamily. OBG GTPase family. In terms of assembly, monomer. Mg(2+) serves as cofactor.

It localises to the cytoplasm. Functionally, an essential GTPase which binds GTP, GDP and possibly (p)ppGpp with moderate affinity, with high nucleotide exchange rates and a fairly low GTP hydrolysis rate. Plays a role in control of the cell cycle, stress response, ribosome biogenesis and in those bacteria that undergo differentiation, in morphogenesis control. This Geobacillus kaustophilus (strain HTA426) protein is GTPase Obg.